Consider the following 698-residue polypeptide: MSKKLENIRNIGICAHIDAGKTTTTERILYYTGKSHKIGEVHEGGATMDWMEQEQERGITITSAATTCRWQDKQINIIDTPGHVDFTIEVERSLRVLDGAVAVFDGVAGVEPQSETVWRQADKYNVPRMCFVNKMDRMGADFYRCVDMIKDRLGAKPLVIQLPIGIEENFKGVVDLVKMQAVVWKDESLGAEYSYQEIPDDMKAKAEEYRANLLDMVVELDDKIMEKYLSGEEVTEEEIKKLIRKGTISAAFYPVLCGSAFKNKGVQPLLDAVVDYLPSPIDIATVKGVEVSTGEEKDFPISVSEPFSALAFKIMNDPFVGSLTFIRVYSGKITSGTTVINTVKNKREKIGRMLLMHANNREDVKEASAGDIVALAGLKDTTTTGDTLSDEDKKVILERMEFPEPVIELAVEPKSKVDQEKMGLALSRLAAEDPSFRTSTDQETGQTVIKGMGELHLEIIIDRMRREFKVEANIGAPQVAYRETITKACEIDYTHKKQSGGAGQFARVKIIFEPLKDVKDLKEEDKNKSFIFESKIVGGAVPKEYIPGVEKGLNNIRETGVIAGYPMIDFKATLIDGAFHDVDSSVLAFEIAAKAAFREGMPKGNPKLLEPIMKVEVITPDEYMGDVIGDLNSRRGQVQGMEPRGNAQVIKAYVPLAEMFGYVNTLRSLSQGRAQYSMVFNHYDQVPTQVADTIKAKK.

The tr-type G domain maps to 6-281; sequence ENIRNIGICA…AVVDYLPSPI (276 aa). Residues 15 to 22, 79 to 83, and 133 to 136 contribute to the GTP site; these read AHIDAGKT, DTPGH, and NKMD.

It belongs to the TRAFAC class translation factor GTPase superfamily. Classic translation factor GTPase family. EF-G/EF-2 subfamily.

It is found in the cytoplasm. Catalyzes the GTP-dependent ribosomal translocation step during translation elongation. During this step, the ribosome changes from the pre-translocational (PRE) to the post-translocational (POST) state as the newly formed A-site-bound peptidyl-tRNA and P-site-bound deacylated tRNA move to the P and E sites, respectively. Catalyzes the coordinated movement of the two tRNA molecules, the mRNA and conformational changes in the ribosome. The protein is Elongation factor G of Rickettsia bellii (strain RML369-C).